The primary structure comprises 290 residues: Protease HtpX (290 aa).

The next 2 membrane-spanning stretches (helical) occupy residues 4 to 24 (IFLF…TLKL) and 36 to 56 (GSLL…SLFI). Zn(2+) is bound at residue histidine 142. Residue glutamate 143 is part of the active site. A Zn(2+)-binding site is contributed by histidine 146. 2 helical membrane passes run 150–170 (GDMV…MFFA) and 193–213 (FVAT…IVMW). Glutamate 219 is a Zn(2+) binding site.

Belongs to the peptidase M48B family. Zn(2+) serves as cofactor.

The protein resides in the cell inner membrane. The polypeptide is Protease HtpX (Stutzerimonas stutzeri (strain A1501) (Pseudomonas stutzeri)).